We begin with the raw amino-acid sequence, 231 residues long: Ribosomal RNA small subunit methyltransferase nep-1 (231 aa).

S-adenosyl-L-methionine-binding positions include Met-161, Gly-188, Gly-193, and Ile-206–Leu-211.

Belongs to the class IV-like SAM-binding methyltransferase superfamily. RNA methyltransferase NEP1 family. Homodimer.

It localises to the nucleus. Its subcellular location is the nucleolus. The catalysed reaction is a pseudouridine in rRNA + S-adenosyl-L-methionine = an N(1)-methylpseudouridine in rRNA + S-adenosyl-L-homocysteine + H(+). Its function is as follows. S-adenosyl-L-methionine-dependent pseudouridine N(1)-methyltransferase that methylates a pseudouridine in 18S rRNA. Involved the biosynthesis of the hypermodified N1-methyl-N3-(3-amino-3-carboxypropyl) pseudouridine (m1acp3-Psi) conserved in eukaryotic 18S rRNA. Also has an essential role in 40S ribosomal subunit biogenesis independent on its methyltransferase activity, facilitating the incorporation of ribosomal protein S19 during the formation of pre-ribosomes. The sequence is that of Ribosomal RNA small subunit methyltransferase nep-1 from Caenorhabditis elegans.